Reading from the N-terminus, the 261-residue chain is UPF0246 protein AZOSEA34360 (261 aa).

This sequence belongs to the UPF0246 family.

This chain is UPF0246 protein AZOSEA34360, found in Aromatoleum aromaticum (strain DSM 19018 / LMG 30748 / EbN1) (Azoarcus sp. (strain EbN1)).